Reading from the N-terminus, the 601-residue chain is Elongation factor 4 (601 aa).

Residues 4-186 (SFIRNFAIIA…SIVHLVPPPK (183 aa)) enclose the tr-type G domain. Residues 16 to 21 (DHGKST) and 133 to 136 (NKID) each bind GTP.

This sequence belongs to the TRAFAC class translation factor GTPase superfamily. Classic translation factor GTPase family. LepA subfamily.

Its subcellular location is the cell inner membrane. The enzyme catalyses GTP + H2O = GDP + phosphate + H(+). Its function is as follows. Required for accurate and efficient protein synthesis under certain stress conditions. May act as a fidelity factor of the translation reaction, by catalyzing a one-codon backward translocation of tRNAs on improperly translocated ribosomes. Back-translocation proceeds from a post-translocation (POST) complex to a pre-translocation (PRE) complex, thus giving elongation factor G a second chance to translocate the tRNAs correctly. Binds to ribosomes in a GTP-dependent manner. This Koribacter versatilis (strain Ellin345) protein is Elongation factor 4.